A 267-amino-acid chain; its full sequence is 4-hydroxy-tetrahydrodipicolinate reductase (267 aa).

Residues 9–14 and D35 contribute to the NAD(+) site; that span reads GAGGRM. Residue R36 participates in NADP(+) binding. NAD(+) contacts are provided by residues 99–101 and 123–126; these read GTT and AANY. H156 acts as the Proton donor/acceptor in catalysis. H157 serves as a coordination point for (S)-2,3,4,5-tetrahydrodipicolinate. The active-site Proton donor is the K160. Residue 166-167 coordinates (S)-2,3,4,5-tetrahydrodipicolinate; sequence GT.

Belongs to the DapB family.

Its subcellular location is the cytoplasm. The enzyme catalyses (S)-2,3,4,5-tetrahydrodipicolinate + NAD(+) + H2O = (2S,4S)-4-hydroxy-2,3,4,5-tetrahydrodipicolinate + NADH + H(+). It carries out the reaction (S)-2,3,4,5-tetrahydrodipicolinate + NADP(+) + H2O = (2S,4S)-4-hydroxy-2,3,4,5-tetrahydrodipicolinate + NADPH + H(+). It functions in the pathway amino-acid biosynthesis; L-lysine biosynthesis via DAP pathway; (S)-tetrahydrodipicolinate from L-aspartate: step 4/4. Catalyzes the conversion of 4-hydroxy-tetrahydrodipicolinate (HTPA) to tetrahydrodipicolinate. The sequence is that of 4-hydroxy-tetrahydrodipicolinate reductase from Halorhodospira halophila (strain DSM 244 / SL1) (Ectothiorhodospira halophila (strain DSM 244 / SL1)).